Here is a 389-residue protein sequence, read N- to C-terminus: Chalcone synthase (389 aa).

Cys-164 is a catalytic residue.

The protein belongs to the thiolase-like superfamily. Chalcone/stilbene synthases family.

The enzyme catalyses (E)-4-coumaroyl-CoA + 3 malonyl-CoA + 3 H(+) = 2',4,4',6'-tetrahydroxychalcone + 3 CO2 + 4 CoA. The protein operates within secondary metabolite biosynthesis; flavonoid biosynthesis. In terms of biological role, the primary product of this enzyme is 4,2',4',6'-tetrahydroxychalcone (also termed naringenin-chalcone or chalcone) which can under specific conditions spontaneously isomerize into naringenin. This chain is Chalcone synthase (CHS), found in Pueraria montana var. lobata (Kudzu vine).